The chain runs to 137 residues: Gonadotropin subunit beta-1 (137 aa).

The N-terminal stretch at 1–24 is a signal peptide; it reads MYCTHLKTLQLVVMATLWVTPVRA. 5 disulfide bridges follow: C32-C78, C46-C93, C55-C108, C59-C110, and C113-C120. N-linked (GlcNAc...) asparagine glycosylation occurs at N36.

It belongs to the glycoprotein hormones subunit beta family. Heterodimer of an alpha and a beta chain.

The protein resides in the secreted. Involved in gametogenesis and steroidogenesis. This Oncorhynchus masou (Cherry salmon) protein is Gonadotropin subunit beta-1 (cgba).